The sequence spans 90 residues: Barrier-to-autointegration factor (90 aa).

Phosphoserine is present on residues S2 and S3. T4 carries the phosphothreonine modification. S5 carries the post-translational modification Phosphoserine.

This sequence belongs to the BAF family. In terms of assembly, homodimer.

It localises to the nucleus. The protein localises to the chromosome. The protein resides in the nucleus envelope. It is found in the cytoplasm. Its function is as follows. Non-specific DNA-binding protein that plays key roles in mitotic nuclear reassembly, chromatin organization, DNA damage response, gene expression and intrinsic immunity against foreign DNA. Contains two non-specific double-stranded DNA (dsDNA)-binding sites which promote DNA cross-bridging. Plays a key role in nuclear membrane reformation at the end of mitosis by driving formation of a single nucleus in a spindle-independent manner. Transiently cross-bridges anaphase chromosomes via its ability to bridge distant DNA sites, leading to the formation of a dense chromatin network at the chromosome ensemble surface that limits membranes to the surface. Also acts as a negative regulator of innate immune activation by restricting CGAS activity toward self-DNA upon acute loss of nuclear membrane integrity. Outcompetes CGAS for DNA-binding, thereby preventing CGAS activation and subsequent damaging autoinflammatory responses. Also involved in DNA damage response; acts by inhibiting the ADP-ribosyltransferase activity of PARP1. Involved in the recognition of exogenous dsDNA in the cytosol: associates with exogenous dsDNA immediately after its appearance in the cytosol at endosome breakdown and is required to avoid autophagy. The sequence is that of Barrier-to-autointegration factor (banf1) from Danio rerio (Zebrafish).